Here is a 312-residue protein sequence, read N- to C-terminus: Peroxidase (312 aa).

The signal sequence occupies residues 1–23; the sequence is MAMGSASCISLVVLVALATAASG. Q24 carries the pyrrolidone carboxylic acid modification. 4 cysteine pairs are disulfide-bonded: C34-C107, C67-C70, C113-C307, and C192-C218. The active-site Proton acceptor is H65. Residues D66, G69, D71, and S73 each coordinate Ca(2+). Substrate is bound at residue P155. H185 is a heme b binding site. Ca(2+) is bound at residue T186. Residues D231, T234, and D239 each contribute to the Ca(2+) site. N-linked (GlcNAc...) asparagine glycosylation is present at N262.

This sequence belongs to the peroxidase family. Classical plant (class III) peroxidase subfamily. Requires Ca(2+) as cofactor. Heme b serves as cofactor. Root.

The protein resides in the secreted. The enzyme catalyses 2 a phenolic donor + H2O2 = 2 a phenolic radical donor + 2 H2O. In terms of biological role, removal of H(2)O(2), oxidation of toxic reductants, biosynthesis and degradation of lignin, suberization, auxin catabolism, response to environmental stresses such as wounding, pathogen attack and oxidative stress. These functions might be dependent on each isozyme/isoform in each plant tissue. Involved in defense response to powdery meldew fungus. The polypeptide is Peroxidase (Triticum aestivum (Wheat)).